Here is a 308-residue protein sequence, read N- to C-terminus: HPr kinase/phosphorylase (308 aa).

Catalysis depends on residues histidine 141 and lysine 162. 156–163 provides a ligand contact to ATP; the sequence is GKSGVGKS. Residue serine 163 participates in Mg(2+) binding. The active-site Proton acceptor; for phosphorylation activity. Proton donor; for dephosphorylation activity is the aspartate 180. The interval 204 to 213 is important for the catalytic mechanism of both phosphorylation and dephosphorylation; it reads MEIRGVGILD. Residue glutamate 205 coordinates Mg(2+). Residue arginine 246 is part of the active site. The tract at residues 267 to 272 is important for the catalytic mechanism of dephosphorylation; that stretch reads PVKPGR.

Belongs to the HPrK/P family. As to quaternary structure, homohexamer. Requires Mg(2+) as cofactor.

It catalyses the reaction [HPr protein]-L-serine + ATP = [HPr protein]-O-phospho-L-serine + ADP + H(+). The enzyme catalyses [HPr protein]-O-phospho-L-serine + phosphate + H(+) = [HPr protein]-L-serine + diphosphate. In terms of biological role, catalyzes the ATP- as well as the pyrophosphate-dependent phosphorylation of a specific serine residue in HPr, a phosphocarrier protein of the phosphoenolpyruvate-dependent sugar phosphotransferase system (PTS). HprK/P also catalyzes the pyrophosphate-producing, inorganic phosphate-dependent dephosphorylation (phosphorolysis) of seryl-phosphorylated HPr (P-Ser-HPr). The two antagonistic activities of HprK/P are regulated by several intracellular metabolites, which change their concentration in response to the absence or presence of rapidly metabolisable carbon sources (glucose, fructose, etc.) in the growth medium. Therefore, by controlling the phosphorylation state of HPr, HPrK/P is a sensor enzyme that plays a major role in the regulation of carbon metabolism and sugar transport: it mediates carbon catabolite repression (CCR), and regulates PTS-catalyzed carbohydrate uptake and inducer exclusion. This chain is HPr kinase/phosphorylase, found in Peptoclostridium acidaminophilum (Eubacterium acidaminophilum).